The following is a 194-amino-acid chain: Imidazoleglycerol-phosphate dehydratase (194 aa).

This sequence belongs to the imidazoleglycerol-phosphate dehydratase family.

It is found in the cytoplasm. The catalysed reaction is D-erythro-1-(imidazol-4-yl)glycerol 3-phosphate = 3-(imidazol-4-yl)-2-oxopropyl phosphate + H2O. It participates in amino-acid biosynthesis; L-histidine biosynthesis; L-histidine from 5-phospho-alpha-D-ribose 1-diphosphate: step 6/9. The protein is Imidazoleglycerol-phosphate dehydratase of Bacillus cereus (strain AH187).